Consider the following 417-residue polypeptide: NADH-quinone oxidoreductase subunit D (417 aa).

Belongs to the complex I 49 kDa subunit family. NDH-1 is composed of 14 different subunits. Subunits NuoB, C, D, E, F, and G constitute the peripheral sector of the complex.

It localises to the cell inner membrane. The catalysed reaction is a quinone + NADH + 5 H(+)(in) = a quinol + NAD(+) + 4 H(+)(out). In terms of biological role, NDH-1 shuttles electrons from NADH, via FMN and iron-sulfur (Fe-S) centers, to quinones in the respiratory chain. The immediate electron acceptor for the enzyme in this species is believed to be ubiquinone. Couples the redox reaction to proton translocation (for every two electrons transferred, four hydrogen ions are translocated across the cytoplasmic membrane), and thus conserves the redox energy in a proton gradient. This chain is NADH-quinone oxidoreductase subunit D, found in Nitrosococcus oceani (strain ATCC 19707 / BCRC 17464 / JCM 30415 / NCIMB 11848 / C-107).